Here is a 104-residue protein sequence, read N- to C-terminus: Large ribosomal subunit protein uL23 (104 aa).

Belongs to the universal ribosomal protein uL23 family. In terms of assembly, part of the 50S ribosomal subunit. Contacts protein L29, and trigger factor when it is bound to the ribosome.

Functionally, one of the early assembly proteins it binds 23S rRNA. One of the proteins that surrounds the polypeptide exit tunnel on the outside of the ribosome. Forms the main docking site for trigger factor binding to the ribosome. The chain is Large ribosomal subunit protein uL23 from Rhodospirillum rubrum (strain ATCC 11170 / ATH 1.1.1 / DSM 467 / LMG 4362 / NCIMB 8255 / S1).